Here is a 106-residue protein sequence, read N- to C-terminus: uncharacterized protein (106 aa).

It to the N-terminal of E.carotovora exoenzyme regulation regulon ORF1. The C-terminal part is colinear with YqcB. This sequence to E.coli YqcC.

This is an uncharacterized protein from Haemophilus influenzae (strain ATCC 51907 / DSM 11121 / KW20 / Rd).